Reading from the N-terminus, the 213-residue chain is Ribosomal RNA small subunit methyltransferase G (213 aa).

Residues G77, F82, 130–131 (IE), and R146 each bind S-adenosyl-L-methionine.

It belongs to the methyltransferase superfamily. RNA methyltransferase RsmG family.

The protein resides in the cytoplasm. It carries out the reaction guanosine(527) in 16S rRNA + S-adenosyl-L-methionine = N(7)-methylguanosine(527) in 16S rRNA + S-adenosyl-L-homocysteine. Functionally, specifically methylates the N7 position of guanine in position 527 of 16S rRNA. This chain is Ribosomal RNA small subunit methyltransferase G, found in Bartonella tribocorum (strain CIP 105476 / IBS 506).